A 30-amino-acid polypeptide reads, in one-letter code: Cyclotide hyen-L (30 aa).

The segment at residues 1–30 (GIPCAESCVYIPCTVTALLGCSCSDKVCYN) is a cross-link (cyclopeptide (Gly-Asn)). 3 cysteine pairs are disulfide-bonded: C4–C21, C8–C23, and C13–C28.

In terms of processing, this is a cyclic peptide. Detected in stems (at protein level).

In terms of biological role, probably participates in a plant defense mechanism. Has cytotoxic activity against HUVEC cells (LC(50)= 2.26 uM) and various cancer cells including HeLa (LC(50)= 3.48 uM), MCF-7 and K562. Displays very weak hemolytic activity. Binds to and induces leakage in phospholipd membranes, particularly ones containing 1-palmitoyl-2-oleophosphatidylethanolamine (POPE). The polypeptide is Cyclotide hyen-L (Pigea enneasperma (Spade flower)).